A 350-amino-acid chain; its full sequence is Hydroxymethylglutaryl-CoA synthase (350 aa).

Position 30 (Asp30) interacts with (3S)-3-hydroxy-3-methylglutaryl-CoA. Glu82 (proton donor/acceptor) is an active-site residue. Residues Cys114, Ser155, Thr203, and His236 each coordinate (3S)-3-hydroxy-3-methylglutaryl-CoA. Cys114 (acyl-thioester intermediate) is an active-site residue. The active-site Proton donor/acceptor is His236. Arg241 serves as a coordination point for CoA. The (3S)-3-hydroxy-3-methylglutaryl-CoA site is built by Arg245, Asn268, and Ser298.

The protein belongs to the thiolase-like superfamily. Archaeal HMG-CoA synthase family. Interacts with acetoacetyl-CoA thiolase that catalyzes the precedent step in the pathway and with a DUF35 protein. The acetoacetyl-CoA thiolase/HMG-CoA synthase complex channels the intermediate via a fused CoA-binding site, which allows for efficient coupling of the endergonic thiolase reaction with the exergonic HMGCS reaction.

It catalyses the reaction acetoacetyl-CoA + acetyl-CoA + H2O = (3S)-3-hydroxy-3-methylglutaryl-CoA + CoA + H(+). Its pathway is metabolic intermediate biosynthesis; (R)-mevalonate biosynthesis; (R)-mevalonate from acetyl-CoA: step 2/3. Functionally, catalyzes the condensation of acetyl-CoA with acetoacetyl-CoA to form 3-hydroxy-3-methylglutaryl-CoA (HMG-CoA). Functions in the mevalonate (MVA) pathway leading to isopentenyl diphosphate (IPP), a key precursor for the biosynthesis of isoprenoid compounds that are building blocks of archaeal membrane lipids. The sequence is that of Hydroxymethylglutaryl-CoA synthase from Pyrobaculum calidifontis (strain DSM 21063 / JCM 11548 / VA1).